The sequence spans 821 residues: Protein EFR3 homolog A (821 aa).

Phosphoserine is present on residues Ser360, Ser363, Ser422, and Ser694.

It belongs to the EFR3 family. As to quaternary structure, component of a phosphatidylinositol 4-kinase (PI4K) complex, composed of PI4KA, EFR3 (EFR3A or EFR3B), TTC7 (TTC7A or TTC7B) and HYCC (HYCC1 or HYCC2). In terms of processing, palmitoylated at its N-terminus, anchoring the protein to the plasma membrane.

The protein localises to the cell membrane. The protein resides in the cytoplasm. Its subcellular location is the cytosol. Its function is as follows. Component of a complex required to localize phosphatidylinositol 4-kinase (PI4K) to the plasma membrane. The complex acts as a regulator of phosphatidylinositol 4-phosphate (PtdIns(4)P) synthesis. In the complex, EFR3A probably acts as the membrane-anchoring component. Also involved in responsiveness to G-protein-coupled receptors; it is however unclear whether this role is direct or indirect. The chain is Protein EFR3 homolog A from Homo sapiens (Human).